Here is a 396-residue protein sequence, read N- to C-terminus: Elongation factor Tu (396 aa).

Positions 10 to 205 (KPHVNIGTIG…AVDESIPDPV (196 aa)) constitute a tr-type G domain. The tract at residues 19-26 (GHVDHGKT) is G1. GTP is bound at residue 19–26 (GHVDHGKT). Mg(2+) is bound at residue Thr26. The tract at residues 62–66 (GITIN) is G2. The segment at 83–86 (DAPG) is G3. GTP-binding positions include 83 to 87 (DAPGH) and 138 to 141 (NKSD). Positions 138–141 (NKSD) are G4. The G5 stretch occupies residues 175-177 (SAL).

The protein belongs to the TRAFAC class translation factor GTPase superfamily. Classic translation factor GTPase family. EF-Tu/EF-1A subfamily. As to quaternary structure, monomer.

It is found in the cytoplasm. It carries out the reaction GTP + H2O = GDP + phosphate + H(+). Its function is as follows. GTP hydrolase that promotes the GTP-dependent binding of aminoacyl-tRNA to the A-site of ribosomes during protein biosynthesis. This is Elongation factor Tu from Mycobacterium marinum (strain ATCC BAA-535 / M).